A 146-amino-acid polypeptide reads, in one-letter code: 3-hydroxyacyl-[acyl-carrier-protein] dehydratase FabZ (146 aa).

Residue histidine 49 is part of the active site.

The protein belongs to the thioester dehydratase family. FabZ subfamily.

Its subcellular location is the cytoplasm. It carries out the reaction a (3R)-hydroxyacyl-[ACP] = a (2E)-enoyl-[ACP] + H2O. Functionally, involved in unsaturated fatty acids biosynthesis. Catalyzes the dehydration of short chain beta-hydroxyacyl-ACPs and long chain saturated and unsaturated beta-hydroxyacyl-ACPs. This is 3-hydroxyacyl-[acyl-carrier-protein] dehydratase FabZ from Ectopseudomonas mendocina (strain ymp) (Pseudomonas mendocina).